We begin with the raw amino-acid sequence, 432 residues long: UDP-N-acetylglucosamine 1-carboxyvinyltransferase (432 aa).

K22–N23 provides a ligand contact to phosphoenolpyruvate. R92 lines the UDP-N-acetyl-alpha-D-glucosamine pocket. The active-site Proton donor is C116. C116 is subject to 2-(S-cysteinyl)pyruvic acid O-phosphothioketal. Residues R121–Q125, D307, and I329 each bind UDP-N-acetyl-alpha-D-glucosamine.

This sequence belongs to the EPSP synthase family. MurA subfamily.

It localises to the cytoplasm. It carries out the reaction phosphoenolpyruvate + UDP-N-acetyl-alpha-D-glucosamine = UDP-N-acetyl-3-O-(1-carboxyvinyl)-alpha-D-glucosamine + phosphate. It functions in the pathway cell wall biogenesis; peptidoglycan biosynthesis. In terms of biological role, cell wall formation. Adds enolpyruvyl to UDP-N-acetylglucosamine. The chain is UDP-N-acetylglucosamine 1-carboxyvinyltransferase from Psychrobacter sp. (strain PRwf-1).